We begin with the raw amino-acid sequence, 461 residues long: Ribulose bisphosphate carboxylase (461 aa).

Asparagine 112 contacts substrate. The active-site Proton acceptor is lysine 167. Substrate is bound at residue lysine 169. Mg(2+)-binding residues include lysine 192, aspartate 194, and glutamate 195. Lysine 192 is subject to N6-carboxylysine. Catalysis depends on histidine 288, which acts as the Proton acceptor. Residues arginine 289, histidine 322, and serine 369 each contribute to the substrate site.

It belongs to the RuBisCO large chain family. Type II subfamily. Homodimer. It depends on Mg(2+) as a cofactor.

The enzyme catalyses 2 (2R)-3-phosphoglycerate + 2 H(+) = D-ribulose 1,5-bisphosphate + CO2 + H2O. The catalysed reaction is D-ribulose 1,5-bisphosphate + O2 = 2-phosphoglycolate + (2R)-3-phosphoglycerate + 2 H(+). RuBisCO catalyzes two reactions: the carboxylation of D-ribulose 1,5-bisphosphate, the primary event in carbon dioxide fixation, as well as the oxidative fragmentation of the pentose substrate. Both reactions occur simultaneously and in competition at the same active site. This is Ribulose bisphosphate carboxylase from Rhodopseudomonas palustris (strain BisB5).